Reading from the N-terminus, the 259-residue chain is Ras-related protein Rab-34 (259 aa).

The residue at position 1 (methionine 1) is an N-acetylmethionine. GTP-binding residues include serine 62, valine 63, glycine 64, lysine 65, threonine 66, aspartate 78, tyrosine 81, and threonine 84. Threonine 66 contributes to the Mg(2+) binding site. The Switch 1 signature appears at 71–89 (RFCKDTFDKNYKATIGVDF). Mg(2+)-binding residues include threonine 84 and aspartate 107. A Switch 2 motif is present at residues 108-127 (TAGQERFKCIASTYYRGAQA). 4 residues coordinate GTP: glycine 110, lysine 167, aspartate 169, and serine 198. A phosphoserine mark is found at serine 241 and serine 244. Residues cysteine 257 and cysteine 258 are each lipidated (S-geranylgeranyl cysteine).

This sequence belongs to the small GTPase superfamily. Rab family. In terms of assembly, interacts with RILP. The GTP-bound form interacts with REP15. It depends on Mg(2+) as a cofactor.

The protein resides in the cytoplasm. The protein localises to the golgi apparatus. Its subcellular location is the cytoplasmic vesicle. It is found in the phagosome. It localises to the phagosome membrane. The protein resides in the cell projection. The protein localises to the cilium. Its subcellular location is the cytoskeleton. It is found in the microtubule organizing center. It localises to the centrosome. The protein resides in the centriole. It carries out the reaction GTP + H2O = GDP + phosphate + H(+). Its activity is regulated as follows. Regulated by guanine nucleotide exchange factors (GEFs) which promote the exchange of bound GDP for free GTP. Regulated by GTPase activating proteins (GAPs) which increase the GTP hydrolysis activity. Inhibited by GDP dissociation inhibitors (GDIs). Functionally, the small GTPases Rab are key regulators of intracellular membrane trafficking, from the formation of transport vesicles to their fusion with membranes. Rabs cycle between an inactive GDP-bound form and an active GTP-bound form that is able to recruit to membranes different sets of downstream effectors directly responsible for vesicle formation, movement, tethering and fusion. RAB34 transports protein involved in the redistribution of lysosomes to the peri-Golgi region. Plays a role in the maturation of phagosomes that engulf pathogens, such as S.aureus and M.tuberculosis. Plays a role in the fusion of phagosomes with lysosomes. Required for the early steps of intracellular ciliogenesis, the cilium assembly pathway initiated by trafficking and docking of ciliary vesicles to the centrioles in the cytoplasm, followed by axoneme formation in the cytoplasm. After axoneme elongation, the centrioles migrate close to the cell surface so that ciliary vesicles can fuse with the plasma membrane to expose cilia to the extracellular space. It seems dispensable for ciliogenesis via the extracellular pathway where cilium assembly begins after migration and docking of the centriole to the plasma membrane. Also acts as a positive regulator of hedgehog signaling and regulates ciliary function. The sequence is that of Ras-related protein Rab-34 (RAB34) from Sus scrofa (Pig).